We begin with the raw amino-acid sequence, 160 residues long: Cyclic pyranopterin monophosphate synthase (160 aa).

Residues 75–77 and 116–117 each bind substrate; these read MCH and ME. Asp-131 is an active-site residue.

Belongs to the MoaC family. Homohexamer; trimer of dimers.

The enzyme catalyses (8S)-3',8-cyclo-7,8-dihydroguanosine 5'-triphosphate = cyclic pyranopterin phosphate + diphosphate. Its pathway is cofactor biosynthesis; molybdopterin biosynthesis. In terms of biological role, catalyzes the conversion of (8S)-3',8-cyclo-7,8-dihydroguanosine 5'-triphosphate to cyclic pyranopterin monophosphate (cPMP). The sequence is that of Cyclic pyranopterin monophosphate synthase from Staphylococcus haemolyticus (strain JCSC1435).